Reading from the N-terminus, the 389-residue chain is Carbamoyl phosphate synthase small chain (389 aa).

Positions 1–197 are CPSase; sequence MMSSPAKAAK…AAKDASIGDD (197 aa). L-glutamine contacts are provided by S51, G249, and G251. The Glutamine amidotransferase type-1 domain occupies 201–387; that stretch reads HVVCMDFGMK…QEQLNEKCGV (187 aa). C276 (nucleophile) is an active-site residue. L277, Q280, N318, G320, and F321 together coordinate L-glutamine. Residues H360 and E362 contribute to the active site.

It belongs to the CarA family. Composed of two chains; the small (or glutamine) chain promotes the hydrolysis of glutamine to ammonia, which is used by the large (or ammonia) chain to synthesize carbamoyl phosphate. Tetramer of heterodimers (alpha,beta)4.

The enzyme catalyses hydrogencarbonate + L-glutamine + 2 ATP + H2O = carbamoyl phosphate + L-glutamate + 2 ADP + phosphate + 2 H(+). It carries out the reaction L-glutamine + H2O = L-glutamate + NH4(+). It participates in amino-acid biosynthesis; L-arginine biosynthesis; carbamoyl phosphate from bicarbonate: step 1/1. The protein operates within pyrimidine metabolism; UMP biosynthesis via de novo pathway; (S)-dihydroorotate from bicarbonate: step 1/3. Functionally, small subunit of the glutamine-dependent carbamoyl phosphate synthetase (CPSase). CPSase catalyzes the formation of carbamoyl phosphate from the ammonia moiety of glutamine, carbonate, and phosphate donated by ATP, constituting the first step of 2 biosynthetic pathways, one leading to arginine and/or urea and the other to pyrimidine nucleotides. The small subunit (glutamine amidotransferase) binds and cleaves glutamine to supply the large subunit with the substrate ammonia. The sequence is that of Carbamoyl phosphate synthase small chain from Rhodopirellula baltica (strain DSM 10527 / NCIMB 13988 / SH1).